The sequence spans 101 residues: Small ribosomal subunit protein uS14 (101 aa).

Belongs to the universal ribosomal protein uS14 family. Part of the 30S ribosomal subunit. Contacts proteins S3 and S10.

In terms of biological role, binds 16S rRNA, required for the assembly of 30S particles and may also be responsible for determining the conformation of the 16S rRNA at the A site. This Bordetella petrii (strain ATCC BAA-461 / DSM 12804 / CCUG 43448) protein is Small ribosomal subunit protein uS14.